The chain runs to 234 residues: Probable GTP-binding protein EngB (234 aa).

The 187-residue stretch at 23 to 209 (AVPEVAFAGR…QRTVAGWLCL (187 aa)) folds into the EngB-type G domain. GTP is bound by residues 31–38 (GRSNAGKS), 58–62 (GRTQH), 82–85 (DLPG), 149–152 (TKAD), and 187–190 (LFSS). Mg(2+) is bound by residues Ser38 and Thr60. A disordered region spans residues 210–234 (PEAMPPSPDAEPAKKTPSPDAQRGE).

Belongs to the TRAFAC class TrmE-Era-EngA-EngB-Septin-like GTPase superfamily. EngB GTPase family. Mg(2+) is required as a cofactor.

Functionally, necessary for normal cell division and for the maintenance of normal septation. The polypeptide is Probable GTP-binding protein EngB (Ralstonia nicotianae (strain ATCC BAA-1114 / GMI1000) (Ralstonia solanacearum)).